Consider the following 307-residue polypeptide: Transmembrane protein 200B (307 aa).

Positions 1 to 38 (MTAGSPEECGEVRRSPEGRVSRLGRRLGRRRRPRSPPE) are disordered. A compositionally biased stretch (basic and acidic residues) spans 10–20 (GEVRRSPEGRV). Residues 22 to 34 (RLGRRLGRRRRPR) show a composition bias toward basic residues. The helical transmembrane segment at 53–73 (GAFAALGALVVLVGMGIAVAG) threads the bilayer. Residues 81-111 (APGSRAANASSPQMSELRREGRGGGRAHGPH) form a disordered region. Asn-88 carries N-linked (GlcNAc...) asparagine glycosylation. Over residues 96-111 (ELRREGRGGGRAHGPH) the composition is skewed to basic and acidic residues. Residues 116 to 136 (LLGPVIMGVGLFVFICANTLL) form a helical membrane-spanning segment. The disordered stretch occupies residues 180 to 211 (AVGCAEPEIWDPSPRRGTSPVPSVRSLRSEPA).

This sequence belongs to the TMEM200 family.

Its subcellular location is the membrane. The sequence is that of Transmembrane protein 200B (TMEM200B) from Homo sapiens (Human).